The following is a 206-amino-acid chain: Ras-related protein O-RAL (206 aa).

21-28 is a binding site for GTP; it reads GSGGVGKS. The Effector region motif lies at 43–51; it reads YEPTKADSY. GTP is bound by residues 68 to 72 and 128 to 131; these read DTAGQ and NKSD. Basic and acidic residues predominate over residues 180-189; sequence KMSENKDKNG. The disordered stretch occupies residues 180–206; it reads KMSENKDKNGKKSSRNKKSLRERCCIL. Cys-203 is subject to Cysteine methyl ester. Cys-203 carries the S-geranylgeranyl cysteine lipid modification. A propeptide spans 204–206 (removed in mature form); it reads CIL.

The protein belongs to the small GTPase superfamily. Ras family.

Its subcellular location is the cell membrane. The catalysed reaction is GTP + H2O = GDP + phosphate + H(+). The sequence is that of Ras-related protein O-RAL from Diplobatis ommata (Ocellated electric ray).